Consider the following 1021-residue polypeptide: Collagen alpha-1(I) chain (1021 aa).

A disordered region spans residues 1 to 1021; sequence DEKSAGGISV…PGPPGPPGPP (1021 aa). Position 3 is an allysine (lysine 3). Position 4 is a phosphoserine (serine 4). Residues proline 23, proline 26, proline 29, proline 38, proline 41, proline 44, proline 59, proline 74, proline 80, proline 89, and proline 95 each carry the 4-hydroxyproline modification. A compositionally biased stretch (low complexity) spans 31 to 50; that stretch reads PQGFQGPPGEPGEPGASGPM. Residues 62–76 are compositionally biased toward basic and acidic residues; that stretch reads NGDDGEAGKPGRPGE. At lysine 98 the chain carries 5-hydroxylysine; alternate. A glycan (O-linked (Gal...) hydroxylysine; alternate) is linked at lysine 98. Serine 104 carries the post-translational modification Phosphoserine. The segment covering 112 to 128 has biased composition (low complexity); it reads DAGPAGPKGEPGSPGEN. A 4-hydroxyproline mark is found at proline 122, proline 125, proline 131, proline 140, proline 146, proline 167, proline 176, proline 179, proline 206, proline 209, proline 221, proline 227, proline 236, proline 242, proline 245, and proline 260. Residues 146-164 show a composition bias toward low complexity; the sequence is PGASGPAGARGNDGATGAA. A compositionally biased stretch (pro residues) spans 166–178; sequence PPGPTGPAGPPGF. Positions 212–262 are enriched in low complexity; that stretch reads AGAAGPAGNPGADGQPGAKGANGAPGIAGAPGFPGARGPSGPQGPSGAPGP. Residue lysine 263 is modified to 5-hydroxylysine. Proline 269, proline 272, proline 284, proline 293, proline 308, proline 314, proline 323, and proline 329 each carry 4-hydroxyproline. A compositionally biased stretch (gly residues) spans 318-327; it reads GERGGPGSRG. Position 338 is a 5-hydroxylysine (lysine 338). Proline 347, proline 356, proline 362, proline 368, proline 377, proline 380, proline 389, proline 398, proline 404, proline 416, proline 425, proline 434, proline 437, proline 455, proline 472, proline 478, proline 484, proline 490, proline 496, proline 502, proline 514, proline 523, proline 534, proline 546, proline 549, proline 555, proline 561, and proline 570 each carry 4-hydroxyproline. Over residues 371–425 the composition is skewed to low complexity; sequence KGLTGSPGSPGPDGKTGPPGPAGQDGRPGPAGPPGARGQAGVMGFPGPKGAAGEP. The segment covering 484-493 has biased composition (low complexity); sequence PGEAGKPGEQ. Over residues 536–558 the composition is skewed to low complexity; that stretch reads NDGAKGDAGAPGAPGSQGAPGLQ. 5-hydroxylysine is present on lysine 582. 4-hydroxyproline occurs at positions 588 and 603. Residues 615–629 show a composition bias toward low complexity; the sequence is AGPSGPAGPTGARGA. A Phosphoserine modification is found at serine 618. A 4-hydroxyproline mark is found at proline 630, proline 636, proline 639, proline 648, proline 654, proline 681, and proline 690. Low complexity predominate over residues 642–672; the sequence is AGFAGPPGADGQPGAKGEPGDAGAKGDAGPS. Position 693 is a 5-hydroxylysine (lysine 693). Low complexity predominate over residues 698–714; it reads SAGPPGATGFPGAAGRV. A 4-hydroxyproline mark is found at proline 702 and proline 708. The residue at position 716 (proline 716) is a 3-hydroxyproline. 4-hydroxyproline occurs at positions 717, 726, 729, 750, 759, 768, 777, 794, 803, 806, 812, 827, 833, 839, 848, and 854. Low complexity predominate over residues 743–752; sequence ETGPAGRPGE. The segment covering 762 to 777 has biased composition (low complexity); sequence SGEKGSPGADGPAGAP. Over residues 826–836 the composition is skewed to pro residues; sequence PPGPMGPPGLA. Residues 838 to 853 are compositionally biased toward low complexity; sequence PPGEAGREGSPGAEGS. Lysine 863 bears the 5-hydroxylysine mark. Residues 871–886 show a composition bias toward pro residues; it reads PGPPGAPGAPGAPGPV. A 4-hydroxyproline mark is found at proline 874, proline 877, and proline 880. Low complexity predominate over residues 907-921; it reads AGPAGARGPAGPQGP. Residues 922-936 show a composition bias toward basic and acidic residues; that stretch reads RGDKGETGEQGDRGI. A 5-hydroxylysine modification is found at lysine 925. Lysine 937 bears the 5-hydroxylysine; alternate mark. Lysine 937 carries an O-linked (Gal...) hydroxylysine; alternate glycan. A 4-hydroxyproline mark is found at proline 952, proline 955, proline 973, and proline 988. Over residues 955 to 988 the composition is skewed to low complexity; sequence PGEQGPSGASGPAGPRGPPGSAGTPGKDGLNGLP. At proline 993 the chain carries 3-hydroxyproline. 4-hydroxyproline is present on proline 994. Over residues 1006-1021 the composition is skewed to pro residues; the sequence is VGPPGPPGPPGPPGPP. The residue at position 1008 (proline 1008) is a 3-hydroxyproline. Proline 1009 carries the post-translational modification 4-hydroxyproline. Proline 1011 is subject to 3-hydroxyproline. Proline 1012 is subject to 4-hydroxyproline. The residue at position 1014 (proline 1014) is a 3-hydroxyproline. Proline 1015, proline 1018, and proline 1021 each carry 4-hydroxyproline.

Belongs to the fibrillar collagen family. As to quaternary structure, trimers of one alpha 2(I) and two alpha 1(I) chains. Post-translationally, contains mostly 4-hydroxyproline. Proline residues at the third position of the tripeptide repeating unit (G-X-Y) are hydroxylated in some or all of the chains. In terms of processing, contains 3-hydroxyproline at a few sites. This modification occurs on the first proline residue in the sequence motif Gly-Pro-Hyp, where Hyp is 4-hydroxyproline. Lysine residues at the third position of the tripeptide repeating unit (G-X-Y) are 5-hydroxylated in some or all of the chains. Post-translationally, O-glycosylated on hydroxylated lysine residues. The O-linked glycan consists of a Glc-Gal disaccharide. As to expression, expressed in bones.

The protein localises to the secreted. Its subcellular location is the extracellular space. It localises to the extracellular matrix. Functionally, type I collagen is a member of group I collagen (fibrillar forming collagen). The chain is Collagen alpha-1(I) chain from Doedicurus sp. (South American giant glyptodont).